Consider the following 286-residue polypeptide: Ribonuclease Z (286 aa).

Residues His61, His63, Asp65, His66, His153, Asp176, and His240 each contribute to the Zn(2+) site. Asp65 functions as the Proton acceptor in the catalytic mechanism.

The protein belongs to the RNase Z family. Homodimer. Zn(2+) serves as cofactor.

The catalysed reaction is Endonucleolytic cleavage of RNA, removing extra 3' nucleotides from tRNA precursor, generating 3' termini of tRNAs. A 3'-hydroxy group is left at the tRNA terminus and a 5'-phosphoryl group is left at the trailer molecule.. Its function is as follows. Zinc phosphodiesterase, which displays some tRNA 3'-processing endonuclease activity. Probably involved in tRNA maturation, by removing a 3'-trailer from precursor tRNA. In Mycolicibacterium gilvum (strain PYR-GCK) (Mycobacterium gilvum (strain PYR-GCK)), this protein is Ribonuclease Z.